The following is a 1111-amino-acid chain: Phytochrome C (1111 aa).

In terms of domain architecture, GAF spans 213–393; sequence NMLLLCDALV…VFGVQINKEA (181 aa). Cys318 is a phytochromobilin binding site. PAS domains follow at residues 604–674 and 737–808; these read IVNE…LEGS and DYAR…TKLR. The Histidine kinase domain maps to 889–1111; that stretch reads YLRHEVKDPE…FVILTEFPLI (223 aa).

It belongs to the phytochrome family. Homodimer. In terms of processing, contains one covalently linked phytochromobilin chromophore.

Functionally, regulatory photoreceptor which exists in two forms that are reversibly interconvertible by light: the Pr form that absorbs maximally in the red region of the spectrum and the Pfr form that absorbs maximally in the far-red region. Photoconversion of Pr to Pfr induces an array of morphogenic responses, whereas reconversion of Pfr to Pr cancels the induction of those responses. Pfr controls the expression of a number of nuclear genes including those encoding the small subunit of ribulose-bisphosphate carboxylase, chlorophyll A/B binding protein, protochlorophyllide reductase, rRNA, etc. It also controls the expression of its own gene(s) in a negative feedback fashion. The chain is Phytochrome C (PHYC) from Arabidopsis thaliana (Mouse-ear cress).